The primary structure comprises 392 residues: Putative cystathionine gamma-lyase 2 (392 aa).

The tract at residues 32–55 is disordered; that stretch reads LSSTYKQDNPGEPKGHDYSRAGNP. The segment covering 40 to 50 has biased composition (basic and acidic residues); the sequence is NPGEPKGHDYS. Substrate contacts are provided by Arg51, Tyr103, and Arg108. Lys203 is modified (N6-(pyridoxal phosphate)lysine). Position 330 (Glu330) interacts with substrate.

Belongs to the trans-sulfuration enzymes family. The cofactor is pyridoxal 5'-phosphate.

It localises to the cytoplasm. The enzyme catalyses L,L-cystathionine + H2O = 2-oxobutanoate + L-cysteine + NH4(+). The protein operates within amino-acid biosynthesis; L-cysteine biosynthesis; L-cysteine from L-homocysteine and L-serine: step 2/2. The polypeptide is Putative cystathionine gamma-lyase 2 (cth-2) (Caenorhabditis elegans).